The primary structure comprises 404 residues: Phosphoglycerate kinase (404 aa).

Substrate is bound by residues 21–23 (DFN), Arg38, 61–64 (HLGR), Arg126, and Arg159. ATP is bound by residues Lys210, Glu333, and 360 to 363 (GGDS).

It belongs to the phosphoglycerate kinase family. As to quaternary structure, monomer.

The protein resides in the cytoplasm. The catalysed reaction is (2R)-3-phosphoglycerate + ATP = (2R)-3-phospho-glyceroyl phosphate + ADP. Its pathway is carbohydrate degradation; glycolysis; pyruvate from D-glyceraldehyde 3-phosphate: step 2/5. The protein is Phosphoglycerate kinase of Acidobacterium capsulatum (strain ATCC 51196 / DSM 11244 / BCRC 80197 / JCM 7670 / NBRC 15755 / NCIMB 13165 / 161).